The chain runs to 471 residues: Pneumolysin (471 aa).

The next 4 membrane-spanning stretches (beta stranded) occupy residues 158 to 171 (MEQLKVKFGSDFEK), 178 to 187 (IDFNSVHSGE), 256 to 265 (SDEVEAAFEA), and 273 to 285 (APQTEWKQILDNT). The Conserved undecapeptide motif lies at 427 to 437 (ECTGLAWEWWR). The Cholesterol binding signature appears at 459 to 460 (TL).

The protein belongs to the cholesterol-dependent cytolysin family. In terms of assembly, homooligomeric pore complex of 35 to 50 subunits; when inserted in the host membrane. Post-translationally, has a slightly altered apparent molecular weight in a secA2 deletion mutant, but no post-translational modifications have been found.

The protein resides in the secreted. Its subcellular location is the cell wall. It localises to the host cell membrane. Functionally, a cholesterol-dependent toxin that causes cytolysis by forming pores in cholesterol containing host membranes. After binding to target membranes, the protein undergoes a major conformation change, leading to its insertion in the host membrane and formation of an oligomeric pore complex. Cholesterol is required for binding to host membranes, membrane insertion and pore formation; cholesterol binding is mediated by a Thr-Leu pair in the C-terminus. Can be reversibly inactivated by oxidation. The chain is Pneumolysin (ply) from Streptococcus pneumoniae serotype 4 (strain ATCC BAA-334 / TIGR4).